Reading from the N-terminus, the 194-residue chain is tRNA (pseudouridine(54)-N(1))-methyltransferase (194 aa).

Leu125 serves as a coordination point for S-adenosyl-L-methionine.

This sequence belongs to the methyltransferase superfamily. TrmY family. Homodimer.

Its subcellular location is the cytoplasm. It carries out the reaction pseudouridine(54) in tRNA + S-adenosyl-L-methionine = N(1)-methylpseudouridine(54) in tRNA + S-adenosyl-L-homocysteine + H(+). In terms of biological role, specifically catalyzes the N1-methylation of pseudouridine at position 54 (Psi54) in tRNAs. In Methanospirillum hungatei JF-1 (strain ATCC 27890 / DSM 864 / NBRC 100397 / JF-1), this protein is tRNA (pseudouridine(54)-N(1))-methyltransferase.